A 276-amino-acid polypeptide reads, in one-letter code: Large ribosomal subunit protein uL2 (276 aa).

Disordered stretches follow at residues 14-58 (RNAS…GGGH) and 219-276 (PITR…KNRK). A compositionally biased stretch (polar residues) spans 16–27 (ASVSDFSELTRS). Residues 255–276 (RRPKKASNKMIVRRRPSGKNRK) are compositionally biased toward basic residues.

It belongs to the universal ribosomal protein uL2 family. In terms of assembly, part of the 50S ribosomal subunit. Forms a bridge to the 30S subunit in the 70S ribosome.

Functionally, one of the primary rRNA binding proteins. Required for association of the 30S and 50S subunits to form the 70S ribosome, for tRNA binding and peptide bond formation. It has been suggested to have peptidyltransferase activity; this is somewhat controversial. Makes several contacts with the 16S rRNA in the 70S ribosome. The protein is Large ribosomal subunit protein uL2 of Bifidobacterium longum (strain DJO10A).